We begin with the raw amino-acid sequence, 79 residues long: Small ribosomal subunit protein bS18B (79 aa).

This sequence belongs to the bacterial ribosomal protein bS18 family. In terms of assembly, part of the 30S ribosomal subunit. Forms a tight heterodimer with protein bS6.

Functionally, binds as a heterodimer with protein bS6 to the central domain of the 16S rRNA, where it helps stabilize the platform of the 30S subunit. In Mycolicibacterium gilvum (strain PYR-GCK) (Mycobacterium gilvum (strain PYR-GCK)), this protein is Small ribosomal subunit protein bS18B.